Reading from the N-terminus, the 359-residue chain is Cinnamyl alcohol dehydrogenase 8 (359 aa).

Cysteine 46 is a Zn(2+) binding site. Serine 48 lines the NADP(+) pocket. Residues histidine 68, glutamate 69, cysteine 99, cysteine 102, cysteine 105, cysteine 113, and cysteine 162 each contribute to the Zn(2+) site. NADP(+) contacts are provided by residues threonine 166, 187 to 192 (GLGGLG), 210 to 215 (STSEKK), threonine 250, glycine 274, and 297 to 299 (SMI).

Belongs to the zinc-containing alcohol dehydrogenase family. Homodimer. Zn(2+) is required as a cofactor. In terms of tissue distribution, expressed in the differentiation and elongation zones of primary and lateral roots. Expressed in the hypocotyl, cotyledon veins, vasculature of the first rosette leaves, hydathodes and trichomes. In stems, expressed in the vascular cambium and developing xylem tissues. Expressed in the style, anthers, stamen filaments, stigmatic regions in flowers, and abscission and style regions of siliques.

The enzyme catalyses (E)-cinnamyl alcohol + NADP(+) = (E)-cinnamaldehyde + NADPH + H(+). It participates in aromatic compound metabolism; phenylpropanoid biosynthesis. In terms of biological role, involved in lignin biosynthesis. Catalyzes the final step specific for the production of lignin monomers. Catalyzes the NADPH-dependent reduction of coniferaldehyde, 5-hydroxyconiferaldehyde, sinapaldehyde, 4-coumaraldehyde and caffeyl aldehyde to their respective alcohols. This chain is Cinnamyl alcohol dehydrogenase 8 (CAD8), found in Arabidopsis thaliana (Mouse-ear cress).